The following is a 344-amino-acid chain: Putative glycosyltransferase EpsH (344 aa).

It belongs to the glycosyltransferase 2 family.

Its function is as follows. May be involved in the production of the exopolysaccharide (EPS) component of the extracellular matrix during biofilm formation. EPS is responsible for the adhesion of chains of cells into bundles. Required for biofilm maintenance. In Bacillus subtilis (strain 168), this protein is Putative glycosyltransferase EpsH (epsH).